The following is a 177-amino-acid chain: 3-hydroxydecanoyl-[acyl-carrier-protein] dehydratase (177 aa).

Residue H76 is part of the active site.

This sequence belongs to the thioester dehydratase family. FabA subfamily. As to quaternary structure, homodimer.

It is found in the cytoplasm. The catalysed reaction is a (3R)-hydroxyacyl-[ACP] = a (2E)-enoyl-[ACP] + H2O. It carries out the reaction (3R)-hydroxydecanoyl-[ACP] = (2E)-decenoyl-[ACP] + H2O. It catalyses the reaction (2E)-decenoyl-[ACP] = (3Z)-decenoyl-[ACP]. It functions in the pathway lipid metabolism; fatty acid biosynthesis. Functionally, necessary for the introduction of cis unsaturation into fatty acids. Catalyzes the dehydration of (3R)-3-hydroxydecanoyl-ACP to E-(2)-decenoyl-ACP and then its isomerization to Z-(3)-decenoyl-ACP. Can catalyze the dehydratase reaction for beta-hydroxyacyl-ACPs with saturated chain lengths up to 16:0, being most active on intermediate chain length. The polypeptide is 3-hydroxydecanoyl-[acyl-carrier-protein] dehydratase (Actinobacillus succinogenes (strain ATCC 55618 / DSM 22257 / CCUG 43843 / 130Z)).